Here is a 192-residue protein sequence, read N- to C-terminus: 7-methyl-GTP pyrophosphatase (192 aa).

Catalysis depends on D69, which acts as the Proton acceptor.

The protein belongs to the Maf family. YceF subfamily. A divalent metal cation is required as a cofactor.

The protein resides in the cytoplasm. It carries out the reaction N(7)-methyl-GTP + H2O = N(7)-methyl-GMP + diphosphate + H(+). Functionally, nucleoside triphosphate pyrophosphatase that hydrolyzes 7-methyl-GTP (m(7)GTP). May have a dual role in cell division arrest and in preventing the incorporation of modified nucleotides into cellular nucleic acids. This chain is 7-methyl-GTP pyrophosphatase, found in Pseudomonas savastanoi pv. phaseolicola (strain 1448A / Race 6) (Pseudomonas syringae pv. phaseolicola (strain 1448A / Race 6)).